A 394-amino-acid polypeptide reads, in one-letter code: Protein TsgA homolog (394 aa).

12 helical membrane-spanning segments follow: residues 11–31 (WISY…GMVM), 51–71 (FLNA…EIIP), 76–96 (LVFG…GHNL), 101–121 (ISMF…TFLI), 134–154 (LLFT…AAAI), 162–182 (WYWV…LTLC), 206–226 (MGVL…LGFI), 246–266 (QLVS…SFIL), 274–294 (IVTV…STNN), 302–322 (ILAL…LGSL), 334–354 (FILT…GPIV), and 363–383 (LATA…LGFF).

Belongs to the major facilitator superfamily. TsgA family.

Its subcellular location is the cell inner membrane. The polypeptide is Protein TsgA homolog (Yersinia enterocolitica serotype O:8 / biotype 1B (strain NCTC 13174 / 8081)).